A 1237-amino-acid chain; its full sequence is MASSSPLQAAAGDRLLPGGPGPSPEAEDDPGEGFEFDDSDDDEDTNAGPDVPRSALETEADTPLIHLDSAPVIDLEPKPEPAQPQTQRPAAVSNGDAVDAAFSEVQRSGWRRKSSRRIERFTFPAVEEDVIYDDVPCENLDAQQPEAERNQPYEDARQDRAPQEPEDLGWSSSEFESYSEDSGEEAKPEAEPTKHRVSFQPKMTQLMKAAKSGTKDGLEKTRIAVMRKVSFLHRKDVLGDSEEEDMGLLEVSVSDIKPPAPELGPMPAGLTPQQVVRRHILGSIVQSEGSYVDSLKRVLQDYRNPLMEMEPKALSARKCRAVFFRVKEILHCHSMFQIALSSRVAEWDSTEKIGDLFVASFSKSMVLDVYSDYVNNFTNAMSIIKKACLTKPAFLEFLKRRQVCSPDRVTLYGLMVKPIQRFPQFILLLQDMLKNTPRGHPDRLSLQLALTELETLAEKLNEQKRLADQVAEIQQLTKSVSDRSSLNKLLTSGQRQLLLCETLTETVYGDRGQLIKSKERRVFLLNDMLVCANINFKGQLEISSLAPLGPKYVVKWSTALPQVQVVEVGQEGGPYDKDNALIQHAGAKKASAAGQAQNKVYLGPPRLFQELQDLQKDLAVVEQITLLVSTLHGTYQNLNMTVAQDWCLALQRLMRVKEEEIHSANKCRLRLLLPGKPDKSGRPISFMVVFITPNPLSKISWVNRLHLAKIGLREENQPGWLCPDEDKQSRAPFWCPILACCVPAFSFRGLSLQLGALVHSPVSCPLLGFSAVSTSLPQGYLWVGGGQEGAGGQVEIFSLNRPSPRTVKSFPLAAPVLCMEYIPEPEEGDGRNGDKGCPAADASAGVHPTICLGLQDGSILLYSSVDTGTQCLAACRSPGLQPVLCLRHSPFHLLAGLQDGTLAAYPRTSGSVPWDLESPPMCLPVGPGPVRALLSLEEAVWASCGPRVTVLDATSLQTQQSFEAHQDEAVSVTHMVKAGSGVWMAFSSGSSIRLFHTETLEHLQEINIATRTTFLLPGQKHLCVTSLLICQGLLWVGTDQGVIVLLPVPRLEGIPKITGKGMVSLNGHCGPVAFLAVATSILAPDILRSDQEEAEGQQAEEDKPDGPAPEPAPVPASHVGGELIRKKGILLQYRLRSTSHLPGPLLSVREPEPADGSALEHSEEDGSIYEMVDDPDVWVHNRPCARDAHRKEICSVAIISGGRGYRNFGSAAGSPGKPAPCGETDSTLLIWQAPLTL.

2 disordered regions span residues 1-117 (MASS…SSRR) and 132-203 (YDDV…QPKM). Over residues 25–45 (EAEDDPGEGFEFDDSDDDEDT) the composition is skewed to acidic residues. Position 39 is a phosphoserine (serine 39). A phosphotyrosine mark is found at tyrosine 132 and tyrosine 153. Composition is skewed to basic and acidic residues over residues 146 to 163 (EAER…RAPQ) and 184 to 194 (EEAKPEAEPTK). At serine 241 the chain carries Phosphoserine. The region spanning 276–463 (VRRHILGSIV…ETLAEKLNEQ (188 aa)) is the DH domain. Disordered regions lie at residues 1091-1118 (QEEA…PASH) and 1142-1164 (PGPL…HSEE).

Interacts with RHOA, RHOB and RHOC.

It is found in the cytoplasm. Acts as a guanine nucleotide exchange factor (GEF) for RHOA, RHOB and RHOC. In Bos taurus (Bovine), this protein is Rho guanine nucleotide exchange factor 10-like protein (ARHGEF10L).